Reading from the N-terminus, the 375-residue chain is Protein RecA (375 aa).

Residue 75–82 participates in ATP binding; it reads GPESSGKT. Residues 339 to 375 are disordered; that stretch reads GPYAKMKDEQTEEAAGDQMDEDKPIDLSPNFDDDDAN. Positions 348 to 358 are enriched in acidic residues; it reads QTEEAAGDQMD.

The protein belongs to the RecA family.

The protein localises to the cytoplasm. In terms of biological role, can catalyze the hydrolysis of ATP in the presence of single-stranded DNA, the ATP-dependent uptake of single-stranded DNA by duplex DNA, and the ATP-dependent hybridization of homologous single-stranded DNAs. It interacts with LexA causing its activation and leading to its autocatalytic cleavage. The sequence is that of Protein RecA from Corynebacterium jeikeium (strain K411).